Here is a 597-residue protein sequence, read N- to C-terminus: Arginine--tRNA ligase (597 aa).

Residues 138-148 (ANPTGPMHVGH) carry the 'HIGH' region motif.

It belongs to the class-I aminoacyl-tRNA synthetase family. In terms of assembly, monomer.

It localises to the cytoplasm. It catalyses the reaction tRNA(Arg) + L-arginine + ATP = L-arginyl-tRNA(Arg) + AMP + diphosphate. The sequence is that of Arginine--tRNA ligase from Nitrobacter winogradskyi (strain ATCC 25391 / DSM 10237 / CIP 104748 / NCIMB 11846 / Nb-255).